Consider the following 132-residue polypeptide: Small ribosomal subunit protein uS8c (132 aa).

It belongs to the universal ribosomal protein uS8 family. Part of the 30S ribosomal subunit.

Its subcellular location is the plastid. It is found in the chloroplast. Its function is as follows. One of the primary rRNA binding proteins, it binds directly to 16S rRNA central domain where it helps coordinate assembly of the platform of the 30S subunit. In Acorus calamus (Sweet flag), this protein is Small ribosomal subunit protein uS8c (rps8).